A 188-amino-acid polypeptide reads, in one-letter code: Large ribosomal subunit protein eL18 (188 aa).

A disordered region spans residues glutamate 147–lysine 188. 2 stretches are compositionally biased toward basic residues: residues serine 161–glycine 171 and arginine 178–lysine 188.

Belongs to the eukaryotic ribosomal protein eL18 family.

Its subcellular location is the cytoplasm. This Diaphorina citri (Asian citrus psyllid) protein is Large ribosomal subunit protein eL18 (RpL18).